Consider the following 90-residue polypeptide: Small ribosomal subunit protein uS15 (90 aa).

The protein belongs to the universal ribosomal protein uS15 family. In terms of assembly, part of the 30S ribosomal subunit. Forms a bridge to the 50S subunit in the 70S ribosome, contacting the 23S rRNA.

Its function is as follows. One of the primary rRNA binding proteins, it binds directly to 16S rRNA where it helps nucleate assembly of the platform of the 30S subunit by binding and bridging several RNA helices of the 16S rRNA. In terms of biological role, forms an intersubunit bridge (bridge B4) with the 23S rRNA of the 50S subunit in the ribosome. The polypeptide is Small ribosomal subunit protein uS15 (Helicobacter hepaticus (strain ATCC 51449 / 3B1)).